Consider the following 271-residue polypeptide: Putative phosphoenolpyruvate synthase regulatory protein (271 aa).

Position 151–158 (151–158) interacts with ADP; the sequence is GVSRSGKT.

The protein belongs to the pyruvate, phosphate/water dikinase regulatory protein family. PSRP subfamily.

It carries out the reaction [pyruvate, water dikinase] + ADP = [pyruvate, water dikinase]-phosphate + AMP + H(+). The catalysed reaction is [pyruvate, water dikinase]-phosphate + phosphate + H(+) = [pyruvate, water dikinase] + diphosphate. Its function is as follows. Bifunctional serine/threonine kinase and phosphorylase involved in the regulation of the phosphoenolpyruvate synthase (PEPS) by catalyzing its phosphorylation/dephosphorylation. The protein is Putative phosphoenolpyruvate synthase regulatory protein of Paraburkholderia xenovorans (strain LB400).